Reading from the N-terminus, the 432-residue chain is 3-phosphoshikimate 1-carboxyvinyltransferase (432 aa).

3-phosphoshikimate is bound by residues Lys23, Ser24, and Arg28. Residue Lys23 participates in phosphoenolpyruvate binding. Positions 95 and 123 each coordinate phosphoenolpyruvate. 3-phosphoshikimate contacts are provided by Ser167, Gln169, Asp317, and Lys344. Gln169 lines the phosphoenolpyruvate pocket. Asp317 serves as the catalytic Proton acceptor. 2 residues coordinate phosphoenolpyruvate: Arg348 and Arg390.

The protein belongs to the EPSP synthase family. In terms of assembly, monomer.

It localises to the cytoplasm. The enzyme catalyses 3-phosphoshikimate + phosphoenolpyruvate = 5-O-(1-carboxyvinyl)-3-phosphoshikimate + phosphate. The protein operates within metabolic intermediate biosynthesis; chorismate biosynthesis; chorismate from D-erythrose 4-phosphate and phosphoenolpyruvate: step 6/7. In terms of biological role, catalyzes the transfer of the enolpyruvyl moiety of phosphoenolpyruvate (PEP) to the 5-hydroxyl of shikimate-3-phosphate (S3P) to produce enolpyruvyl shikimate-3-phosphate and inorganic phosphate. This Staphylococcus carnosus (strain TM300) protein is 3-phosphoshikimate 1-carboxyvinyltransferase.